The primary structure comprises 129 residues: uncharacterized protein (129 aa).

Residues 1-13 (MSDVAETVVAQEP) are compositionally biased toward low complexity. Positions 1 to 129 (MSDVAETVVA…SGDAPAVAAE (129 aa)) are disordered. Residues 34 to 94 (IDEKTSEQNG…KRVSSAHEEA (61 aa)) are compositionally biased toward basic and acidic residues. Over residues 117–129 (VAASGDAPAVAAE) the composition is skewed to low complexity.

This is an uncharacterized protein from Caenorhabditis elegans.